The chain runs to 349 residues: Ribosomal RNA large subunit methyltransferase Cfr (349 aa).

Glu-89 functions as the Proton acceptor in the catalytic mechanism. The 236-residue stretch at Lys-96 to Asp-331 folds into the Radical SAM core domain. An intrachain disulfide couples Cys-103 to Cys-336. Positions 110, 114, and 117 each coordinate [4Fe-4S] cluster. Residues Gly-156–Glu-157, Ser-187, Ser-210–His-212, and Asn-291 each bind S-adenosyl-L-methionine. Catalysis depends on Cys-336, which acts as the S-methylcysteine intermediate.

Belongs to the radical SAM superfamily. RlmN family. Cfr subfamily. Requires [4Fe-4S] cluster as cofactor.

Its subcellular location is the cytoplasm. It carries out the reaction adenosine(2503) in 23S rRNA + 2 reduced [2Fe-2S]-[ferredoxin] + 2 S-adenosyl-L-methionine = 8-methyladenosine(2503) in 23S rRNA + 5'-deoxyadenosine + L-methionine + 2 oxidized [2Fe-2S]-[ferredoxin] + S-adenosyl-L-homocysteine. In terms of biological role, specifically methylates position 8 of adenine 2503 in 23S rRNA. Confers resistance to some classes of antibiotics. This chain is Ribosomal RNA large subunit methyltransferase Cfr, found in Bacillus velezensis (strain DSM 23117 / BGSC 10A6 / LMG 26770 / FZB42) (Bacillus amyloliquefaciens subsp. plantarum).